Reading from the N-terminus, the 341-residue chain is L-threonine 3-dehydrogenase (341 aa).

Residue Cys-38 coordinates Zn(2+). Catalysis depends on charge relay system residues Thr-40 and His-43. Positions 63, 64, 93, 96, 99, and 107 each coordinate Zn(2+). Residues Ile-175, Asp-195, Arg-200, 262-264, and 286-287 each bind NAD(+); these read LGI and IY.

The protein belongs to the zinc-containing alcohol dehydrogenase family. Homotetramer. It depends on Zn(2+) as a cofactor.

The protein resides in the cytoplasm. The enzyme catalyses L-threonine + NAD(+) = (2S)-2-amino-3-oxobutanoate + NADH + H(+). It participates in amino-acid degradation; L-threonine degradation via oxydo-reductase pathway; glycine from L-threonine: step 1/2. Its function is as follows. Catalyzes the NAD(+)-dependent oxidation of L-threonine to 2-amino-3-ketobutyrate. The chain is L-threonine 3-dehydrogenase from Shewanella baltica (strain OS223).